The following is a 248-amino-acid chain: Tryptophan synthase alpha chain (248 aa).

Residues glutamate 36 and aspartate 47 each act as proton acceptor in the active site.

This sequence belongs to the TrpA family. In terms of assembly, tetramer of two alpha and two beta chains.

The enzyme catalyses (1S,2R)-1-C-(indol-3-yl)glycerol 3-phosphate + L-serine = D-glyceraldehyde 3-phosphate + L-tryptophan + H2O. It participates in amino-acid biosynthesis; L-tryptophan biosynthesis; L-tryptophan from chorismate: step 5/5. Functionally, the alpha subunit is responsible for the aldol cleavage of indoleglycerol phosphate to indole and glyceraldehyde 3-phosphate. This is Tryptophan synthase alpha chain from Pyrococcus furiosus (strain ATCC 43587 / DSM 3638 / JCM 8422 / Vc1).